The sequence spans 145 residues: Large ribosomal subunit protein uL13 (145 aa).

The protein belongs to the universal ribosomal protein uL13 family. In terms of assembly, part of the 50S ribosomal subunit. Binds to Obg (AC P20964).

This protein is one of the early assembly proteins of the 50S ribosomal subunit, although it is not seen to bind rRNA by itself. It is important during the early stages of 50S assembly. This Bacillus subtilis (strain 168) protein is Large ribosomal subunit protein uL13.